A 634-amino-acid chain; its full sequence is ATP-dependent zinc metalloprotease FtsH (634 aa).

The Cytoplasmic portion of the chain corresponds to Met-1–Lys-5. A helical transmembrane segment spans residues Asn-6 to Gly-26. At Lys-27–Trp-100 the chain is on the periplasmic side. Residues Leu-101–Leu-121 form a helical membrane-spanning segment. At Leu-122 to Val-634 the chain is on the cytoplasmic side. Gly-195–Thr-202 is an ATP binding site. His-418 is a binding site for Zn(2+). Glu-419 is a catalytic residue. Residues His-422 and Asp-496 each coordinate Zn(2+). Residues Asp-615–Val-634 form a disordered region.

This sequence in the central section; belongs to the AAA ATPase family. The protein in the C-terminal section; belongs to the peptidase M41 family. In terms of assembly, the isolated protease domain (residues 405-634) forms a stable hexamer. Zn(2+) serves as cofactor.

It localises to the cell inner membrane. Acts as a processive, ATP-dependent zinc metallopeptidase for both cytoplasmic and membrane proteins. Plays a role in the quality control of integral membrane proteins. The sequence is that of ATP-dependent zinc metalloprotease FtsH from Aquifex aeolicus (strain VF5).